We begin with the raw amino-acid sequence, 74 residues long: Peptide ToAP4 (74 aa).

The N-terminal stretch at 1–22 (MQIKHLITLFFLVLIVADQCSA) is a signal peptide. K39 carries the post-translational modification Lysine amide. Positions 40 to 74 (GGRRKREIAAQIEQYRDLQKREAELEELLDRLPMF) are excised as a propeptide.

Belongs to the non-disulfide-bridged peptide (NDBP) superfamily. Short antimicrobial peptide (group 4) family. Expressed by the venom gland.

The protein localises to the secreted. Functionally, shows anti-inflammatory activities, since it decreases release of pro-inflammatory cytokines, and increases release of anti-inflammatory cytokines. Acts by blocking the Toll-like receptor 4 (TLR4). Also increases MHC-II expression in LPS-stimulated cells. Does not show antibacterial activity on Mycobacterium abscessus subsp. massiliense. Does not show antifungal activity. Has low hemolytic activity on human erythrocyte and low monocyte cytotoxicity. In vivo, does not induce immune cell migration. Helical wheel projections predict an amphipathic peptide with distinct hydrophobic and hydrophilic faces. This chain is Peptide ToAP4, found in Tityus obscurus (Amazonian scorpion).